Consider the following 199-residue polypeptide: RNA pyrophosphohydrolase (199 aa).

The Nudix hydrolase domain occupies 6-154 (GYRPNVGIVL…KREVYELALS (149 aa)). The short motif at 38–59 (GGIQHGESPEQAMYRELHEEVG) is the Nudix box element.

This sequence belongs to the Nudix hydrolase family. RppH subfamily. It depends on a divalent metal cation as a cofactor.

Functionally, accelerates the degradation of transcripts by removing pyrophosphate from the 5'-end of triphosphorylated RNA, leading to a more labile monophosphorylated state that can stimulate subsequent ribonuclease cleavage. This chain is RNA pyrophosphohydrolase, found in Polynucleobacter asymbioticus (strain DSM 18221 / CIP 109841 / QLW-P1DMWA-1) (Polynucleobacter necessarius subsp. asymbioticus).